Consider the following 168-residue polypeptide: Transcriptional repressor NrdR (168 aa).

A zinc finger lies at 3-34 (CPFCQDAENKVIDSRESHEGSVIRRRRECLTC). In terms of domain architecture, ATP-cone spans 49–139 (PLIVKKDGRR…VYRSFRDIAE (91 aa)).

It belongs to the NrdR family. Zn(2+) is required as a cofactor.

Functionally, negatively regulates transcription of bacterial ribonucleotide reductase nrd genes and operons by binding to NrdR-boxes. The protein is Transcriptional repressor NrdR of Myxococcus xanthus (strain DK1622).